The primary structure comprises 119 residues: Large ribosomal subunit protein bL20 (119 aa).

Belongs to the bacterial ribosomal protein bL20 family.

Binds directly to 23S ribosomal RNA and is necessary for the in vitro assembly process of the 50S ribosomal subunit. It is not involved in the protein synthesizing functions of that subunit. In Alkaliphilus oremlandii (strain OhILAs) (Clostridium oremlandii (strain OhILAs)), this protein is Large ribosomal subunit protein bL20.